Here is a 432-residue protein sequence, read N- to C-terminus: 3-phosphoshikimate 1-carboxyvinyltransferase (432 aa).

Lys22, Ser23, and Arg27 together coordinate 3-phosphoshikimate. Lys22 contributes to the phosphoenolpyruvate binding site. Phosphoenolpyruvate contacts are provided by Gly96 and Arg127. Residues Ser173, Ser174, Gln175, Ser201, Asp316, Asn339, and Lys343 each coordinate 3-phosphoshikimate. Gln175 contacts phosphoenolpyruvate. The active-site Proton acceptor is Asp316. Arg347, Arg391, and Lys416 together coordinate phosphoenolpyruvate.

It belongs to the EPSP synthase family. As to quaternary structure, monomer.

It localises to the cytoplasm. The enzyme catalyses 3-phosphoshikimate + phosphoenolpyruvate = 5-O-(1-carboxyvinyl)-3-phosphoshikimate + phosphate. It functions in the pathway metabolic intermediate biosynthesis; chorismate biosynthesis; chorismate from D-erythrose 4-phosphate and phosphoenolpyruvate: step 6/7. Catalyzes the transfer of the enolpyruvyl moiety of phosphoenolpyruvate (PEP) to the 5-hydroxyl of shikimate-3-phosphate (S3P) to produce enolpyruvyl shikimate-3-phosphate and inorganic phosphate. This Histophilus somni (strain 2336) (Haemophilus somnus) protein is 3-phosphoshikimate 1-carboxyvinyltransferase.